Consider the following 177-residue polypeptide: Large ribosomal subunit protein uL6 (177 aa).

This sequence belongs to the universal ribosomal protein uL6 family. Part of the 50S ribosomal subunit.

Functionally, this protein binds to the 23S rRNA, and is important in its secondary structure. It is located near the subunit interface in the base of the L7/L12 stalk, and near the tRNA binding site of the peptidyltransferase center. This is Large ribosomal subunit protein uL6 from Albidiferax ferrireducens (strain ATCC BAA-621 / DSM 15236 / T118) (Rhodoferax ferrireducens).